The sequence spans 209 residues: Endonuclease III (209 aa).

A HhH domain is found at 108 to 127 (RTELESLPGVGRKTANIILN). Residues cysteine 187, cysteine 194, cysteine 197, and cysteine 203 each contribute to the [4Fe-4S] cluster site.

Belongs to the Nth/MutY family. [4Fe-4S] cluster is required as a cofactor.

The enzyme catalyses 2'-deoxyribonucleotide-(2'-deoxyribose 5'-phosphate)-2'-deoxyribonucleotide-DNA = a 3'-end 2'-deoxyribonucleotide-(2,3-dehydro-2,3-deoxyribose 5'-phosphate)-DNA + a 5'-end 5'-phospho-2'-deoxyribonucleoside-DNA + H(+). Functionally, DNA repair enzyme that has both DNA N-glycosylase activity and AP-lyase activity. The DNA N-glycosylase activity releases various damaged pyrimidines from DNA by cleaving the N-glycosidic bond, leaving an AP (apurinic/apyrimidinic) site. The AP-lyase activity cleaves the phosphodiester bond 3' to the AP site by a beta-elimination, leaving a 3'-terminal unsaturated sugar and a product with a terminal 5'-phosphate. This chain is Endonuclease III, found in Buchnera aphidicola subsp. Schizaphis graminum (strain Sg).